The primary structure comprises 273 residues: NH(3)-dependent NAD(+) synthetase (273 aa).

ATP is bound at residue 47-54 (GISGGQDS). D53 is a Mg(2+) binding site. R139 lines the deamido-NAD(+) pocket. T159 serves as a coordination point for ATP. E164 serves as a coordination point for Mg(2+). Positions 172 and 179 each coordinate deamido-NAD(+). ATP-binding residues include K188 and T210. 259-260 (HK) serves as a coordination point for deamido-NAD(+).

The protein belongs to the NAD synthetase family. In terms of assembly, homodimer.

It catalyses the reaction deamido-NAD(+) + NH4(+) + ATP = AMP + diphosphate + NAD(+) + H(+). It participates in cofactor biosynthesis; NAD(+) biosynthesis; NAD(+) from deamido-NAD(+) (ammonia route): step 1/1. Catalyzes the ATP-dependent amidation of deamido-NAD to form NAD. Uses ammonia as a nitrogen source. In Staphylococcus aureus (strain COL), this protein is NH(3)-dependent NAD(+) synthetase.